Reading from the N-terminus, the 964-residue chain is uncharacterized protein (964 aa).

2 disordered regions span residues 1–31 (MDSE…SDCE) and 169–199 (EETY…DEIS). The segment covering 10–27 (HSICNSVSSGENYKSPES) has biased composition (polar residues). A coiled-coil region spans residues 656 to 840 (EVMESLQVEI…LILNQTSMAK (185 aa)).

This is an uncharacterized protein from Caenorhabditis elegans.